The chain runs to 111 residues: uncharacterized protein (111 aa).

Transmembrane regions (helical) follow at residues 7 to 29 (LYSSIMYVFFYIRIHTVFLRALY) and 49 to 71 (PSLLMLKIISTPLAFLIPNSINL).

Its subcellular location is the membrane. This is an uncharacterized protein from Saccharomyces cerevisiae (strain ATCC 204508 / S288c) (Baker's yeast).